The sequence spans 1442 residues: Chitin synthase regulator SKT5 (1442 aa).

2 disordered regions span residues 1–54 (MTHP…SPTL) and 72–117 (LALK…RHLQ). Residues 12-25 (NGKEPEKEEPRCVH) are compositionally biased toward basic and acidic residues. Over residues 39 to 53 (KSSSAITNENVSSPT) the composition is skewed to polar residues. The segment covering 75–99 (KEPENGKNKHPDSEQDDGDMKEQRS) has biased composition (basic and acidic residues). Sel1-like repeat units lie at residues 198 to 236 (VESQ…KRGH), 237 to 272 (PDAA…SRKH), 273 to 309 (PGAQ…ENAT), 313 to 350 (PHAL…EMGY), 351 to 387 (APSA…QQNH), 388 to 425 (KEAC…EQGL), and 426 to 461 (AKAE…EHGD). The disordered stretch occupies residues 550 to 1402 (EKPKTATPTS…FSTPDSSSSK (853 aa)). Pro residues predominate over residues 605–617 (PKPPTPPPPPPPE). The span at 633–648 (FKSRLLRLGKMGKIRK) shows a compositional bias: basic residues. The span at 747 to 758 (GPSSAAGADGAP) shows a compositional bias: low complexity. 3 stretches are compositionally biased toward basic and acidic residues: residues 762–804 (GEPK…KSEK), 821–840 (GSDK…KPSD), and 859–875 (RPDE…KDSE). The segment covering 876–891 (STSPSSPKPTTGSAEP) has biased composition (low complexity). 3 stretches are compositionally biased toward pro residues: residues 964–977 (PFPP…PPNA), 1139–1158 (RPGP…PSRP), and 1200–1220 (AMQP…PTGP). Residues 1232–1243 (PSQSSMHQSGNG) are compositionally biased toward polar residues. Positions 1271–1282 (PRPPRPTSPPPF) are enriched in pro residues. Over residues 1295-1305 (RGVMPPGSGPS) the composition is skewed to low complexity. 2 stretches are compositionally biased toward pro residues: residues 1306–1322 (MRPP…PRSP) and 1371–1386 (DRPP…PPKT). A compositionally biased stretch (polar residues) spans 1392 to 1402 (GFSTPDSSSSK).

Belongs to the SKT5 family.

It localises to the cell membrane. In terms of biological role, activator of the chitin synthase CHS3 which polymerizes chitin, a structural polymer of the fungal cell wall. The chain is Chitin synthase regulator SKT5 from Malassezia restricta (strain ATCC 96810 / NBRC 103918 / CBS 7877) (Seborrheic dermatitis infection agent).